The sequence spans 699 residues: Elongation factor G (699 aa).

The tr-type G domain occupies 8-283 (EQIRNIGICA…AIVDFLPSPI (276 aa)). GTP-binding positions include 17–24 (AHIDAGKT), 81–85 (DTPGH), and 135–138 (NKMD).

This sequence belongs to the TRAFAC class translation factor GTPase superfamily. Classic translation factor GTPase family. EF-G/EF-2 subfamily.

Its subcellular location is the cytoplasm. Its function is as follows. Catalyzes the GTP-dependent ribosomal translocation step during translation elongation. During this step, the ribosome changes from the pre-translocational (PRE) to the post-translocational (POST) state as the newly formed A-site-bound peptidyl-tRNA and P-site-bound deacylated tRNA move to the P and E sites, respectively. Catalyzes the coordinated movement of the two tRNA molecules, the mRNA and conformational changes in the ribosome. The polypeptide is Elongation factor G (fusA) (Rickettsia prowazekii (strain Madrid E)).